Here is a 558-residue protein sequence, read N- to C-terminus: 2-isopropylmalate synthase (558 aa).

In terms of domain architecture, Pyruvate carboxyltransferase spans 30–303 (PIWCSVDLRD…DPELDCRDIE (274 aa)). 4 residues coordinate Mg(2+): Asp39, His242, His244, and Asn278. Residues 437–558 (QPNARIKFVD…ANRVLEERAK (122 aa)) form a regulatory domain region.

This sequence belongs to the alpha-IPM synthase/homocitrate synthase family. LeuA type 2 subfamily. Homodimer. The cofactor is Mg(2+).

It is found in the cytoplasm. It carries out the reaction 3-methyl-2-oxobutanoate + acetyl-CoA + H2O = (2S)-2-isopropylmalate + CoA + H(+). It participates in amino-acid biosynthesis; L-leucine biosynthesis; L-leucine from 3-methyl-2-oxobutanoate: step 1/4. In terms of biological role, catalyzes the condensation of the acetyl group of acetyl-CoA with 3-methyl-2-oxobutanoate (2-ketoisovalerate) to form 3-carboxy-3-hydroxy-4-methylpentanoate (2-isopropylmalate). The chain is 2-isopropylmalate synthase from Agrobacterium fabrum (strain C58 / ATCC 33970) (Agrobacterium tumefaciens (strain C58)).